A 148-amino-acid chain; its full sequence is MPSRYPGAVTQDWEPVVLHKSKQKSQDLRDPKAVNAALRNGVAVQTVKKFDAGSNKKGKSTAVPVINTKKLEEETEPAAMDRVKAEVRLMIQKARLEKKMSQADLAKQINERTQVVQEYENGKAVPNQAVLAKMEKVLGVKLRGKIGK.

The HTH cro/C1-type domain occupies 91 to 145 (IQKARLEKKMSQADLAKQINERTQVVQEYENGKAVPNQAVLAKMEKVLGVKLRGK). The segment at residues 102–121 (QADLAKQINERTQVVQEYEN) is a DNA-binding region (H-T-H motif).

Belongs to the MBF1 family. In terms of assembly, binds to TPS5. Expressed in leaves, roots, stems, flowers, siliques and shoots. Not detected in seeds.

It localises to the nucleus. Its subcellular location is the nucleolus. The protein localises to the cytoplasm. Transcriptional coactivator that stimulates transcriptional activity by bridging regulatory proteins and TBP, thereby recruiting TBP to promoters occupied by DNA-binding regulators. Involved in the tolerance to heat and osmotic stress by partially activating the ethylene-response signal transduction pathway. In Arabidopsis thaliana (Mouse-ear cress), this protein is Multiprotein-bridging factor 1c (MBF1C).